The following is a 195-amino-acid chain: Holliday junction branch migration complex subunit RuvA (195 aa).

The domain I stretch occupies residues methionine 1–lysine 61. A domain II region spans residues lysine 62–phenylalanine 139. The segment at phenylalanine 139 to threonine 143 is flexible linker. The tract at residues threonine 144 to glycine 195 is domain III.

This sequence belongs to the RuvA family. As to quaternary structure, homotetramer. Forms an RuvA(8)-RuvB(12)-Holliday junction (HJ) complex. HJ DNA is sandwiched between 2 RuvA tetramers; dsDNA enters through RuvA and exits via RuvB. An RuvB hexamer assembles on each DNA strand where it exits the tetramer. Each RuvB hexamer is contacted by two RuvA subunits (via domain III) on 2 adjacent RuvB subunits; this complex drives branch migration. In the full resolvosome a probable DNA-RuvA(4)-RuvB(12)-RuvC(2) complex forms which resolves the HJ.

It is found in the cytoplasm. Its function is as follows. The RuvA-RuvB-RuvC complex processes Holliday junction (HJ) DNA during genetic recombination and DNA repair, while the RuvA-RuvB complex plays an important role in the rescue of blocked DNA replication forks via replication fork reversal (RFR). RuvA specifically binds to HJ cruciform DNA, conferring on it an open structure. The RuvB hexamer acts as an ATP-dependent pump, pulling dsDNA into and through the RuvAB complex. HJ branch migration allows RuvC to scan DNA until it finds its consensus sequence, where it cleaves and resolves the cruciform DNA. The protein is Holliday junction branch migration complex subunit RuvA of Pediococcus pentosaceus (strain ATCC 25745 / CCUG 21536 / LMG 10740 / 183-1w).